The primary structure comprises 57 residues: UPF0391 membrane protein Patl_0263 (57 aa).

Transmembrane regions (helical) follow at residues 8–28 and 30–50; these read FFVLGVIAAVFGFGGVIGVAA and IAKVIFLLCVAFVVLFSVLAF.

The protein belongs to the UPF0391 family.

The protein localises to the cell membrane. The polypeptide is UPF0391 membrane protein Patl_0263 (Pseudoalteromonas atlantica (strain T6c / ATCC BAA-1087)).